A 391-amino-acid polypeptide reads, in one-letter code: 3-ketoacyl-CoA thiolase (391 aa).

Catalysis depends on Cys-95, which acts as the Acyl-thioester intermediate. Residues His-347 and Cys-377 each act as proton acceptor in the active site.

It belongs to the thiolase-like superfamily. Thiolase family. As to quaternary structure, heterotetramer of two alpha chains (FadB) and two beta chains (FadA).

The protein localises to the cytoplasm. It catalyses the reaction an acyl-CoA + acetyl-CoA = a 3-oxoacyl-CoA + CoA. It participates in lipid metabolism; fatty acid beta-oxidation. Functionally, catalyzes the final step of fatty acid oxidation in which acetyl-CoA is released and the CoA ester of a fatty acid two carbons shorter is formed. The polypeptide is 3-ketoacyl-CoA thiolase (Pseudomonas savastanoi pv. phaseolicola (strain 1448A / Race 6) (Pseudomonas syringae pv. phaseolicola (strain 1448A / Race 6))).